A 60-amino-acid chain; its full sequence is Large ribosomal subunit protein uL30 (60 aa).

This sequence belongs to the universal ribosomal protein uL30 family. Part of the 50S ribosomal subunit.

In Streptococcus gordonii (strain Challis / ATCC 35105 / BCRC 15272 / CH1 / DL1 / V288), this protein is Large ribosomal subunit protein uL30.